Reading from the N-terminus, the 204-residue chain is Urease accessory protein UreG (204 aa).

A GTP-binding site is contributed by Gly-12–Thr-19.

The protein belongs to the SIMIBI class G3E GTPase family. UreG subfamily. In terms of assembly, homodimer. UreD, UreF and UreG form a complex that acts as a GTP-hydrolysis-dependent molecular chaperone, activating the urease apoprotein by helping to assemble the nickel containing metallocenter of UreC. The UreE protein probably delivers the nickel.

It localises to the cytoplasm. Its function is as follows. Facilitates the functional incorporation of the urease nickel metallocenter. This process requires GTP hydrolysis, probably effectuated by UreG. In Pseudomonas fluorescens (strain ATCC BAA-477 / NRRL B-23932 / Pf-5), this protein is Urease accessory protein UreG.